We begin with the raw amino-acid sequence, 532 residues long: Eukaryotic translation initiation factor 4B1 (532 aa).

Disordered stretches follow at residues 16 to 365 (EAER…LEEQ), 401 to 434 (KKLE…IIRG), and 451 to 532 (RFRQ…REGW). Low complexity predominate over residues 26-35 (AEATAATADT). Gly residues-rich tracts occupy residues 105-120 (RLGG…SGGR) and 132-147 (WSGG…YGGG). Residues 167–180 (RADEVDDWGKEKKP) are compositionally biased toward basic and acidic residues. The short motif at 177 to 184 (EKKPLPSF) is the Nuclear localization signal 1 element. A compositionally biased stretch (gly residues) spans 193 to 217 (SGDGGGFGGGGSGFGGGGGGGGGGL). The short motif at 237–244 (SSTFGSSF) is the Nuclear localization signal 2 element. Over residues 237–247 (SSTFGSSFGDS) the composition is skewed to low complexity. Basic and acidic residues-rich tracts occupy residues 249-263 (QEER…RKVE) and 286-310 (RPRE…EAKK). Residues 315-337 (TSRPTSAHSSRPSSAQSNRSESS) are compositionally biased toward low complexity. 4 stretches are compositionally biased toward basic and acidic residues: residues 355 to 365 (AKPREVLLEEQ), 401 to 416 (KKLE…KESD), 472 to 494 (ERTH…ERPR), and 507 to 520 (NEQR…KERG).

Belongs to the eIF-4 subunit B family. As to quaternary structure, homodimer. Nonspherical monomer. mRNA-discriminating component of initiation complexes. In terms of processing, phosphorylated.

Its subcellular location is the nucleus. In terms of biological role, promotes the eIF4F and eIF4A RNA-dependent ATP-hydrolysis activity with different efficiency depending on mRNAs, thus providing mRNA discrimination during initiation of translation. The chain is Eukaryotic translation initiation factor 4B1 from Arabidopsis thaliana (Mouse-ear cress).